The sequence spans 199 residues: NAD(P)H dehydrogenase (quinone) 1 (199 aa).

Residues 4-190 enclose the Flavodoxin-like domain; it reads VLVLYYSAYG…EAARFQGAHV (187 aa). FMN contacts are provided by residues 10-15 and 78-80; these read SAYGHI and TRY. Tyr12 is an NAD(+) binding site. Trp98 serves as a coordination point for substrate. FMN-binding positions include 113–119 and His134; that span reads SSATQHG.

Belongs to the WrbA family. FMN is required as a cofactor.

The catalysed reaction is a quinone + NADH + H(+) = a quinol + NAD(+). It carries out the reaction a quinone + NADPH + H(+) = a quinol + NADP(+). The sequence is that of NAD(P)H dehydrogenase (quinone) 1 from Rhizobium meliloti (strain 1021) (Ensifer meliloti).